Reading from the N-terminus, the 304-residue chain is Developmental pluripotency-associated protein 4 (304 aa).

Polar residues predominate over residues 1–11; that stretch reads MLRGSASSTSM. Disordered stretches follow at residues 1–84 and 147–176; these read MLRG…IPPL and KKLKVEKGETSLQSSETHPPEVALPPVGEP. Positions 12 to 29 are enriched in basic and acidic residues; sequence EKAKGKEWTSTEKSREED. Phosphothreonine is present on Thr215. Ser221 and Ser226 each carry phosphoserine.

In terms of assembly, interacts with DPPA2. Interacts with PCGF1.

Its subcellular location is the nucleus. Its function is as follows. May be involved in the maintenance of active epigenetic status of target genes. May inhibit differentiation of embryonic cells into a primitive ectoderm lineage. The chain is Developmental pluripotency-associated protein 4 (DPPA4) from Homo sapiens (Human).